The primary structure comprises 197 residues: Holliday junction branch migration complex subunit RuvA (197 aa).

Positions 1–64 are domain I; sequence MIASVRGVVQ…EDMLALFGFS (64 aa). Positions 65–143 are domain II; the sequence is SPAQRALFEL…VATISPQLST (79 aa). The flexible linker stretch occupies residues 144 to 153; it reads NPGLLALNTE. The interval 153-197 is domain III; the sequence is ELIDILTSLGYSTTEAQAALNALPADAPADTEERLRLALQYFGGV.

Belongs to the RuvA family. Homotetramer. Forms an RuvA(8)-RuvB(12)-Holliday junction (HJ) complex. HJ DNA is sandwiched between 2 RuvA tetramers; dsDNA enters through RuvA and exits via RuvB. An RuvB hexamer assembles on each DNA strand where it exits the tetramer. Each RuvB hexamer is contacted by two RuvA subunits (via domain III) on 2 adjacent RuvB subunits; this complex drives branch migration. In the full resolvosome a probable DNA-RuvA(4)-RuvB(12)-RuvC(2) complex forms which resolves the HJ.

It localises to the cytoplasm. Its function is as follows. The RuvA-RuvB-RuvC complex processes Holliday junction (HJ) DNA during genetic recombination and DNA repair, while the RuvA-RuvB complex plays an important role in the rescue of blocked DNA replication forks via replication fork reversal (RFR). RuvA specifically binds to HJ cruciform DNA, conferring on it an open structure. The RuvB hexamer acts as an ATP-dependent pump, pulling dsDNA into and through the RuvAB complex. HJ branch migration allows RuvC to scan DNA until it finds its consensus sequence, where it cleaves and resolves the cruciform DNA. This is Holliday junction branch migration complex subunit RuvA from Herpetosiphon aurantiacus (strain ATCC 23779 / DSM 785 / 114-95).